A 225-amino-acid polypeptide reads, in one-letter code: UPF0758 protein NMB1038 (225 aa).

The region spanning 102–224 is the MPN domain; sequence VLSDPDTVAD…VCSFRQLGLM (123 aa). Zn(2+)-binding residues include His173, His175, and Asp186. Residues 173 to 186 carry the JAMM motif motif; it reads HNHPGGSPEPSQED.

The protein belongs to the UPF0758 family.

The sequence is that of UPF0758 protein NMB1038 from Neisseria meningitidis serogroup B (strain ATCC BAA-335 / MC58).